The sequence spans 113 residues: Cytochrome c oxidase subunit 7A2-like, mitochondrial (113 aa).

A mitochondrion-targeting transit peptide spans 1 to 54 (MYYKFSSFTQKLAGAWASEAYTPQGLKPVSTEAPPIIFATPTKLTSSVTAYDYS). Residue K68 is modified to N6-acetyllysine. Residues 81–106 (PDQMLYRTTMALTLGGTIYCLIALYM) traverse the membrane as a helical segment.

It belongs to the cytochrome c oxidase VIIa family. As to quaternary structure, interacts with the mitochondrial respiratory complexes III (CIII) and IV (CIV), promoting their association.

The protein resides in the mitochondrion inner membrane. It functions in the pathway energy metabolism; oxidative phosphorylation. Its function is as follows. Assembly factor that mediates the formation of some mitochondrial respiratory supercomplexes (respirasomes), thereby promoting oxidative phosphorylation and energy metabolism. Acts as a molecular adapter that associates with both mitochondrial respiratory complexes III (CIII) and IV (CIV), promoting their association. Mediates the formation of various mitochondrial respiratory supercomplexes, such as MCIII(2)IV(2), composed of two CIII and two CIV, and the CS-respirasome (MCI(1)III(2)IV(2)), composed of one CI, two CIII and two CIV. Not involved in the formation of the canonical respirasome (MCI(1)III(2)IV(1)), composed of one CI, two CIII and one CIV. The formation of different respirasomes is important for cell adaptation to oxygen conditions and prevent metabolic exhaustion: supercomplexes mediated by COX7A2L/SCAF1 are required to maintain oxidative phosphorylation upon low oxygen conditions and promote metabolic rewiring toward glycolysis. The chain is Cytochrome c oxidase subunit 7A2-like, mitochondrial from Mus musculus (Mouse).